A 240-amino-acid chain; its full sequence is MGRDIMVSLEEAVIARYTSHGEKFEILVDPYLAAKLKEGQNVDFDELLAIEVVFRDASKGEKAPEELLSKIFGTTDVKEIAKKIILKGQVQLTAKQREEIREQKKRQIITIISRNTINPQTDTPHPPHRIEKAMEELRINIDIYKSAEEQVPEIVKKLKKVLPIRFEKRDIAVKIPAEFASKAYNALYQFGAVKQEEWQPDGSLIVLIEIPSGIEAEFYAHLNKITKGNVQTKVVKKYSE.

It belongs to the SDO1/SBDS family.

This is Ribosome maturation protein SDO1 homolog from Methanocaldococcus jannaschii (strain ATCC 43067 / DSM 2661 / JAL-1 / JCM 10045 / NBRC 100440) (Methanococcus jannaschii).